The sequence spans 1733 residues: DNA-directed RNA polymerase II subunit RPB1 (1733 aa).

Residues cysteine 67, cysteine 70, cysteine 77, histidine 80, cysteine 107, cysteine 110, cysteine 148, and cysteine 167 each coordinate Zn(2+). Positions 248–260 are lid loop; that stretch reads PSISFNESQRGED. Residues 306–323 are rudder loop; sequence NDIAGQPQALQKSGRPVK. Mg(2+) is bound by residues aspartate 481, aspartate 483, and aspartate 485. A Glycyl lysine isopeptide (Lys-Gly) (interchain with G-Cter in ubiquitin) cross-link involves residue lysine 695. Positions 810-822 are bridging helix; that stretch reads PQEFFFHAMGGRE. Glycyl lysine isopeptide (Lys-Gly) (interchain with G-Cter in ubiquitin) cross-links involve residues lysine 1246 and lysine 1350. A Phosphothreonine modification is found at threonine 1471. A disordered region spans residues 1537-1733; sequence VSSPGFSPTS…QKHNENENSR (197 aa). The span at 1538-1719 shows a compositional bias: low complexity; that stretch reads SSPGFSPTSP…YSPGSPAYSP (182 aa). 23 tandem repeats follow at residues 1549–1555, 1556–1562, 1563–1569, 1570–1576, 1577–1583, 1584–1590, 1591–1597, 1598–1604, 1605–1611, 1612–1618, 1619–1625, 1626–1632, 1633–1639, 1640–1646, 1647–1653, 1654–1660, 1661–1667, 1668–1674, 1675–1681, 1682–1688, 1689–1695, 1696–1702, and 1703–1709. Positions 1549–1716 are C-terminal domain (CTD); 24 X 7 AA approximate tandem repeats of Y-S-P-T-S-P-[A-S-N-G]; sequence YSPTSPAYSP…SPGYSPGSPA (168 aa). One copy of the 24; approximate repeat lies at 1710–1716; the sequence is YSPGSPA. Basic and acidic residues predominate over residues 1720–1733; sequence KQDEQKHNENENSR.

Belongs to the RNA polymerase beta' chain family. Component of the RNA polymerase II (Pol II) complex consisting of 12 subunits. Interacts with DEF1; the interaction is direct and serves to bridge RPB1 to the Elongin complex in a DNA-damaged dependent manner. Interacts with the Elongin subunit ELA1. Interacts with the Elongin subunit ELC1. Interacts with ASK10. Interacts with ESS1. Interacts with RTT103. Interacts with SHE2. In terms of processing, the tandem 7 residues repeats in the C-terminal domain (CTD) can be highly phosphorylated. The phosphorylation activates Pol II. Phosphorylation occurs mainly at residues 'Ser-2' and 'Ser-5' of the heptapeptide repeat. The phosphorylated form of Pol II appears to carry, on average, one phosphate per repeat. The phosphorylation state is believed to result from the balanced action of site-specific CTD kinases and phosphatases, and a 'CTD code' that specifies the position of Pol II within the transcription cycle has been proposed. Phosphorylation at 'Ser-5' occurs in promoter-proximal regions in early elongation. Phosphorylation at 'Ser-2' predominates in regions more distal to the promoter and triggers binding of the 3' RNA processing machinery. CTD kinases include KIN28 (as part of the TFKII complex, a subcomplex of the TFIIH holo complex), SSN3/SRB10 (as part of the SRB8-11 complex, a module of the Mediator complex), CTK1 (as part of CTD kinase), and probably BUR1 (as part of the BUR1-BUR2 kinase complex). Phosphatases include FCP1 and SSU72. Post-translationally, following transcription stress, the elongating form of RNA polymerase II (RNA pol IIo) is polyubiquitinated via 'Lys-63'-linkages on Lys-1246 by the RSP5-UBA1-UBC5 complex at DNA damage sites without leading to degradation: ubiquitination promotes RNA pol IIo backtracking to allow access by the transcription-coupled nucleotide excision repair (TC-NER) machinery. Subsequent DEF1-dependent polyubiquitination by the elongin complex via 'Lys-48'-linkages may lead to proteasome-mediated degradation; presumably at stalled RNA pol II where TC-NER has failed, to halt global transcription and enable 'last resort' DNA repair pathways.

Its subcellular location is the nucleus. The catalysed reaction is RNA(n) + a ribonucleoside 5'-triphosphate = RNA(n+1) + diphosphate. Functionally, DNA-dependent RNA polymerase catalyzes the transcription of DNA into RNA using the four ribonucleoside triphosphates as substrates. Largest and catalytic component of RNA polymerase II which synthesizes mRNA precursors and many functional non-coding RNAs. Forms the polymerase active center together with the second largest subunit. Pol II is the central component of the basal RNA polymerase II transcription machinery. During a transcription cycle, Pol II, general transcription factors and the Mediator complex assemble as the preinitiation complex (PIC) at the promoter. 11-15 base pairs of DNA surrounding the transcription start site are melted and the single-stranded DNA template strand of the promoter is positioned deeply within the central active site cleft of Pol II to form the open complex. After synthesis of about 30 bases of RNA, Pol II releases its contacts with the core promoter and the rest of the transcription machinery (promoter clearance) and enters the stage of transcription elongation in which it moves on the template as the transcript elongates. Pol II appears to oscillate between inactive and active conformations at each step of nucleotide addition. Elongation is influenced by the phosphorylation status of the C-terminal domain (CTD) of Pol II largest subunit (RPB1), which serves as a platform for assembly of factors that regulate transcription initiation, elongation, termination and mRNA processing. Pol II is composed of mobile elements that move relative to each other. The core element with the central large cleft comprises RPB3, RBP10, RPB11, RPB12 and regions of RPB1 and RPB2 forming the active center. The clamp element (portions of RPB1, RPB2 and RPB3) is connected to the core through a set of flexible switches and moves to open and close the cleft. A bridging helix emanates from RPB1 and crosses the cleft near the catalytic site and is thought to promote translocation of Pol II by acting as a ratchet that moves the RNA-DNA hybrid through the active site by switching from straight to bent conformations at each step of nucleotide addition. In elongating Pol II, the lid loop (RPB1) appears to act as a wedge to drive apart the DNA and RNA strands at the upstream end of the transcription bubble and guide the RNA strand toward the RNA exit groove located near the base of the largely unstructured CTD domain of RPB1. The rudder loop (RPB1) interacts with single-stranded DNA after separation from the RNA strand, likely preventing reassociation with the exiting RNA. The cleft is surrounded by jaws: an upper jaw formed by portions of RBP1, RPB2 and RPB9, and a lower jaw, formed by RPB5 and portions of RBP1. The jaws are thought to grab the incoming DNA template, mainly by RPB5 direct contacts to DNA. This is DNA-directed RNA polymerase II subunit RPB1 (RPO21) from Saccharomyces cerevisiae (strain ATCC 204508 / S288c) (Baker's yeast).